Consider the following 373-residue polypeptide: Muconate cycloisomerase 1 (373 aa).

The active site involves K169. K169 acts as the Proton acceptor in catalysis. 3 residues coordinate Mn(2+): D198, E224, and D249. E327 serves as the catalytic Proton donor.

The protein belongs to the mandelate racemase/muconate lactonizing enzyme family. It depends on Mn(2+) as a cofactor.

The catalysed reaction is (S)-muconolactone = cis,cis-muconate + H(+). This Rhodococcus opacus (Nocardia opaca) protein is Muconate cycloisomerase 1 (catB).